The following is a 311-amino-acid chain: uncharacterized protein (311 aa).

This is an uncharacterized protein from Sinorhizobium fredii (strain NBRC 101917 / NGR234).